The primary structure comprises 132 residues: Snaclec bothroinsularin subunit alpha (132 aa).

3 disulfide bridges follow: cysteine 2/cysteine 13, cysteine 30/cysteine 127, and cysteine 102/cysteine 119. Residues 9–128 (YGQYCYKFFQ…CGQQNPFVCK (120 aa)) enclose the C-type lectin domain.

The protein belongs to the snaclec family. Heterodimer of subunits alpha and beta; disulfide-linked. As to expression, expressed by the venom gland.

Its subcellular location is the secreted. Functionally, thrombin and prothrombin (F2) inhibitor. The IC(50) of thrombin-induced platelet aggregation and fibrinocoagulation is 62 and 35 nM, respectively. Its inhibitory activity is at least 10-fold lower than that observed for other thrombin inhibitors. This chain is Snaclec bothroinsularin subunit alpha, found in Bothrops insularis (Golden lancehead).